A 314-amino-acid chain; its full sequence is 3'-5' exoribonuclease YhaM (314 aa).

The region spanning 163 to 279 is the HD domain; the sequence is HVVSMLHLAK…LHYIDNLDAK (117 aa).

The protein belongs to the YhaM family.

In terms of biological role, shows a 3'-5' exoribonuclease activity. The sequence is that of 3'-5' exoribonuclease YhaM from Bacillus pumilus (strain SAFR-032).